Consider the following 366-residue polypeptide: 3-dehydroquinate synthase (366 aa).

Residues Asp-75–Lys-80, Gly-109–Asp-113, Thr-133–Thr-134, Lys-146, Lys-155, and Thr-173–Thr-176 contribute to the NAD(+) site. The Zn(2+) site is built by Glu-188, His-251, and His-268.

It belongs to the sugar phosphate cyclases superfamily. Dehydroquinate synthase family. The cofactor is Co(2+). It depends on Zn(2+) as a cofactor. NAD(+) is required as a cofactor.

Its subcellular location is the cytoplasm. The catalysed reaction is 7-phospho-2-dehydro-3-deoxy-D-arabino-heptonate = 3-dehydroquinate + phosphate. It participates in metabolic intermediate biosynthesis; chorismate biosynthesis; chorismate from D-erythrose 4-phosphate and phosphoenolpyruvate: step 2/7. Catalyzes the conversion of 3-deoxy-D-arabino-heptulosonate 7-phosphate (DAHP) to dehydroquinate (DHQ). The polypeptide is 3-dehydroquinate synthase (Nitrosospira multiformis (strain ATCC 25196 / NCIMB 11849 / C 71)).